Here is a 236-residue protein sequence, read N- to C-terminus: Sensory rhodopsin I (236 aa).

Helical transmembrane passes span 6-26 (VVYGITAAGFAVGVAIVGFLY), 37-57 (ILAALALIPGVAGISYVAMVF), 74-94 (YLDWVVTTPLLVGFIGYTAGA), 98-118 (AIFGVMAADALMILAGVGAVV), 126-146 (ALFGVSAVFHISLFAYLYLIF), 167-187 (VGLLWIAYPLVWLAGPEGLGF), and 192-212 (GVSITYAFLDLLAKVPYVYFF). Lysine 205 carries the post-translational modification N6-(retinylidene)lysine.

This sequence belongs to the archaeal/bacterial/fungal opsin family. In terms of assembly, interacts with Htr1. The covalent binding of retinal to the apoprotein, bacterioopsin, generates bacteriorhodopsin.

It is found in the membrane. Functionally, photoattractant rhodopsin. This is Sensory rhodopsin I (sop1) from Haloarcula marismortui (strain ATCC 43049 / DSM 3752 / JCM 8966 / VKM B-1809) (Halobacterium marismortui).